We begin with the raw amino-acid sequence, 41 residues long: Photosystem I reaction center subunit IX (41 aa).

Residues 7-27 (YLSVAPVLSTLWFGALAGLLI) form a helical membrane-spanning segment.

The protein belongs to the PsaJ family.

The protein resides in the plastid. It localises to the chloroplast thylakoid membrane. Its function is as follows. May help in the organization of the PsaE and PsaF subunits. The chain is Photosystem I reaction center subunit IX from Jasminum nudiflorum (Winter jasmine).